The primary structure comprises 151 residues: Mating pheromone 3 (151 aa).

An N-terminal signal peptide occupies residues 1–16; the sequence is MKAIFIILAILMVTQA. Residues 17–52 constitute a propeptide that is removed on maturation; it reads FKMTSKVNTKLQSQIQSKFQSKNKLASTFQTSSQLK.

Its subcellular location is the secreted. Its function is as follows. Mating ciliate pheromones (or gamones) are diffusible extracellular communication signals that distinguish different intraspecific classes of cells commonly referred to as 'mating types'. They prepare the latter for conjugation by changing their cell surface properties. The polypeptide is Mating pheromone 3 (PHR3) (Euplotoides octocarinatus (Freshwater ciliate)).